A 541-amino-acid chain; its full sequence is Membrane protein insertase YidC (541 aa).

The helical transmembrane segment at 6-26 (SLLVLALIFISFLVYQQWQLD) threads the bilayer. The tract at residues 34-56 (EQTTSITATSDVPASSPSNSQAI) is disordered. The next 4 helical transmembrane spans lie at 337–357 (FWLL…IICV), 416–436 (LGGC…YWTF), 454–474 (LSAQ…MFLL), and 495–515 (PLIF…YWLV).

The protein belongs to the OXA1/ALB3/YidC family. Type 1 subfamily. Interacts with the Sec translocase complex via SecD. Specifically interacts with transmembrane segments of nascent integral membrane proteins during membrane integration.

It is found in the cell inner membrane. In terms of biological role, required for the insertion and/or proper folding and/or complex formation of integral membrane proteins into the membrane. Involved in integration of membrane proteins that insert both dependently and independently of the Sec translocase complex, as well as at least some lipoproteins. Aids folding of multispanning membrane proteins. This Haemophilus influenzae (strain PittEE) protein is Membrane protein insertase YidC.